A 186-amino-acid polypeptide reads, in one-letter code: ADP-ribosylation factor-like protein 8B (186 aa).

The residue at position 1 (Met1) is an N-acetylmethionine. Residues 1 to 19 (MLALISRLLDWFRSLFWKE) constitute an intramembrane region (note=Mediates targeting to membranes). GTP is bound by residues 29-35 (QYSGKTT), 71-75 (DIGGQ), and 130-133 (NKRD). Lys141 participates in a covalent cross-link: Glycyl lysine isopeptide (Lys-Gly) (interchain with G-Cter in ubiquitin).

Belongs to the small GTPase superfamily. Arf family. Interacts with tubulin. Interacts with BORCS5; recruits ARL8B to lysosomes. Interacts with VPS41; the interaction mediates the recruitment of the HOPS complex to lysosomes. Interacts (GTP-bound form) with PLEKHM2 (via RUN domain); the interaction is required to recruit the motor protein kinesin-1 on lysosomes. Interacts (GTP-bound form) with PLEKHM1 (via RUN domain); the interaction is required for PLEKHM1 localization to lysosomes and for ARL8B function in delivery and degradation of endocytic and autophagic cargo in lysosomes. PLEKHM1 and PLEKHM2 compete for interaction with ARL8B. Interacts (GTP-bound form) with RUFY1; the interaction is required for RUFY1 endosomal location. When GTP-bound, interacts with RUFY3 and RUFY4, but not with RUFY1, nor RUFY2. Post-translationally, ubiquitinated at Lys-141 by RNF167, leading to its degradation. In terms of tissue distribution, ubiquitously expressed.

It localises to the late endosome membrane. Its subcellular location is the lysosome membrane. It is found in the cytoplasm. The protein resides in the cytoskeleton. The protein localises to the spindle. It localises to the cell projection. Its subcellular location is the axon. It is found in the synapse. The protein resides in the cytolytic granule membrane. The protein localises to the early endosome membrane. The catalysed reaction is GTP + H2O = GDP + phosphate + H(+). Its function is as follows. Small GTPase which cycles between active GTP-bound and inactive GDP-bound states. In its active state, binds to a variety of effector proteins playing a key role in the regulation of lysosomal positioning which is important for nutrient sensing, natural killer cell-mediated cytotoxicity and antigen presentation. Along with its effectors, orchestrates lysosomal transport and fusion. Localizes specifically to lysosomal membranes and mediates anterograde lysosomal motility by recruiting PLEKHM2, which in turn recruits the motor protein kinesin-1 on lysosomes. Required for lysosomal and cytolytic granule exocytosis. Critical factor involved in NK cell-mediated cytotoxicity. Drives the polarization of cytolytic granules and microtubule-organizing centers (MTOCs) toward the immune synapse between effector NK lymphocytes and target cells. In neurons, mediates the anterograde axonal long-range transport of presynaptic lysosome-related vesicles required for presynaptic biogenesis and synaptic function. Also acts as a regulator of endosome to lysosome trafficking pathways of special significance for host defense. Recruits RUFY1 onto early endosomes regulating endosomes to trans-Golgi network proteins retrieval. Regulates cargo trafficking to lysosomes by binding to PLEKHM1 and recruiting the HOPS subunit VPS41, resulting in functional assembly of the HOPS complex on lysosomal membranes. Plays an important role in cargo delivery to lysosomes for antigen presentation and microbial killing. Directs the intersection of CD1d with lipid antigens in lysosomes, and plays a role in intersecting phagosomes with lysosomes to generate phagolysosomes that kill microbes. Involved in the process of MHC II presentation. Regulates the delivery of antigens to lysosomes and the formation of MHC II-peptide complexes through the recruitment of the HOPS complex to lysosomes allowing the fusion of late endosomes to lysosomes. May play a role in chromosome segregation. In terms of biological role, (Microbial infection) During Mycobacterium tuberculosis (Mtb) infection, is required for plasma membrane repair by controlling the exocytosis of lysosomes in macrophages. ARL8B secretion pathway is crucial to control the type of cell death of the M.tuberculosis-infected macrophages, distinguishing avirulent from virulent Mtb induced necrotic cell death. Functionally, (Microbial infection) During infection, coronaviruses such as SARS-CoV-2 and the chaperone HSPA5/GRP78 are probably co-released through ARL8B-dependent lysosomal exocytic pathway for unconventional egress. The sequence is that of ADP-ribosylation factor-like protein 8B from Homo sapiens (Human).